The primary structure comprises 560 residues: Formate--tetrahydrofolate ligase (560 aa).

70–77 (TPAGEGKT) serves as a coordination point for ATP.

The protein belongs to the formate--tetrahydrofolate ligase family.

It carries out the reaction (6S)-5,6,7,8-tetrahydrofolate + formate + ATP = (6R)-10-formyltetrahydrofolate + ADP + phosphate. It functions in the pathway one-carbon metabolism; tetrahydrofolate interconversion. The protein is Formate--tetrahydrofolate ligase of Methanocorpusculum labreanum (strain ATCC 43576 / DSM 4855 / Z).